The chain runs to 1792 residues: Protein TIC 214 (1792 aa).

A run of 6 helical transmembrane segments spans residues 18–38, 64–84, 87–107, 129–149, 165–185, and 221–241; these read IINS…FSIG, FITG…HLAL, PHII…GNNH, IFFH…SSIL, IFLI…MKWI, and IFLV…PPPF.

The protein belongs to the TIC214 family. As to quaternary structure, part of the Tic complex.

It is found in the plastid. The protein localises to the chloroplast inner membrane. Functionally, involved in protein precursor import into chloroplasts. May be part of an intermediate translocation complex acting as a protein-conducting channel at the inner envelope. This is Protein TIC 214 from Glycine max (Soybean).